The sequence spans 481 residues: Argininosuccinate lyase (481 aa).

It belongs to the lyase 1 family. Argininosuccinate lyase subfamily.

The protein resides in the cytoplasm. The enzyme catalyses 2-(N(omega)-L-arginino)succinate = fumarate + L-arginine. It participates in amino-acid biosynthesis; L-arginine biosynthesis; L-arginine from L-ornithine and carbamoyl phosphate: step 3/3. This is Argininosuccinate lyase from Methanococcus vannielii (strain ATCC 35089 / DSM 1224 / JCM 13029 / OCM 148 / SB).